Reading from the N-terminus, the 618-residue chain is Elongation factor 4 (618 aa).

Residues 17–198 (AIIRNFCIIA…KIVRDLPAPE (182 aa)) enclose the tr-type G domain. Residues 29 to 34 (DHGKST) and 145 to 148 (NKID) contribute to the GTP site.

The protein belongs to the TRAFAC class translation factor GTPase superfamily. Classic translation factor GTPase family. LepA subfamily.

The protein localises to the cell membrane. The enzyme catalyses GTP + H2O = GDP + phosphate + H(+). Its function is as follows. Required for accurate and efficient protein synthesis under certain stress conditions. May act as a fidelity factor of the translation reaction, by catalyzing a one-codon backward translocation of tRNAs on improperly translocated ribosomes. Back-translocation proceeds from a post-translocation (POST) complex to a pre-translocation (PRE) complex, thus giving elongation factor G a second chance to translocate the tRNAs correctly. Binds to ribosomes in a GTP-dependent manner. This chain is Elongation factor 4, found in Pseudarthrobacter chlorophenolicus (strain ATCC 700700 / DSM 12829 / CIP 107037 / JCM 12360 / KCTC 9906 / NCIMB 13794 / A6) (Arthrobacter chlorophenolicus).